Reading from the N-terminus, the 377-residue chain is Caspase-4 (377 aa).

Residues 1–59 are required for LPS-binding; it reads MAEGNHRKKPLKVLESLGKDFLTGVLDNLVEQNVLNWKEEEKKKYYDAKTEDKVRVMAD. Positions 1–80 are excised as a propeptide; sequence MAEGNHRKKP…MLLQTFFNID (80 aa). Residues 1–91 enclose the CARD domain; that stretch reads MAEGNHRKKP…ISPNKKAHPN (91 aa). Ala2 is subject to N-acetylalanine. Position 83 is a phosphoserine (Ser83). Residues 84-104 form a disordered region; sequence PNKKAHPNMEAGPPESGESTD. Catalysis depends on residues His210 and Cys258. Positions 271–289 are excised as a propeptide; that stretch reads SPASLEVASSQSSENLEED. Arg314 is subject to (Microbial infection) ADP-riboxanated arginine.

The protein belongs to the peptidase C14A family. As to quaternary structure, heterotetramer that consists of two anti-parallel arranged heterodimers, each one formed by a 20 kDa (Caspase-4 subunit p20) and a 10 kDa (Caspase-4 subunit p10) subunit. Upon direct LPS-binding, forms large homooligomers, resulting in its activation. These oligomers are often referred to as 'non-canonical inflammasomes'. In its precursor form, interacts with TMEM214; this interaction is required for association with the endoplasmic reticulum membrane. Interacts with CASP1. Interacts with NOD2. Interacts with SERPINB1; this interaction regulates CASP4 activity. In terms of assembly, heterotetramer that consists of two anti-parallel arranged heterodimers, each one formed by a 20 kDa (Caspase-4 subunit p20) and a 10 kDa (Caspase-4 subunit p10) subunit. (Microbial infection) Interacts with NleF protein from pathogenic E.coli; this interaction leads to enzyme inhibition. As to quaternary structure, (Microbial infection) Interacts with cathepsin CTSG; the interaction is promoted by the Td92 surface protein of the periodontal pathogen T.denticola and leads to CASP4 activation. Post-translationally, in response to activation signals, undergoes autoproteolytic cleavage and activation. (Microbial infection) ADP-riboxanation by S.flexneri OspC3 blocks CASP4 autoprocessing, preventing CASP4 activation and ability to recognize and cleave GSDMD, thereby thwarting the inflammasome/pyroptosis-mediated defense. In terms of tissue distribution, widely expressed, including in keratinocytes and colonic and small intestinal epithelial cells (at protein level). Not detected in brain.

The protein localises to the cytoplasm. Its subcellular location is the cytosol. The protein resides in the endoplasmic reticulum membrane. It is found in the mitochondrion. It localises to the inflammasome. The protein localises to the secreted. The enzyme catalyses Strict requirement for Asp at the P1 position. It has a preferred cleavage sequence of Tyr-Val-Ala-Asp-|- but also cleaves at Asp-Glu-Val-Asp-|-.. Activated by homooligomerization induced by direct binding to cytosolic LPS, in a TLR4-independent manner. In addition to LPS, CASP4/CASP11 may also be activated by oxidized phospholipid 1-palmitoyl-2-arachidonoyl- sn-glycero-3-phosphorylcholine, an oxidized phospholipid (oxPAPC), in dendritic cells, promoting adaptive immunity. The role of oxPAPC is however unclear and another report suggests that oxPAPC competes with LPS-binding and inhibits the non-canonical inflammasome in macrophages. Inflammatory caspase that acts as the effector of the non-canonical inflammasome by mediating lipopolysaccharide (LPS)-induced pyroptosis. Also indirectly activates the NLRP3 and NLRP6 inflammasomes. Acts as a thiol protease that cleaves a tetrapeptide after an Asp residue at position P1: catalyzes cleavage of CGAS, GSDMD and IL18. Effector of the non-canonical inflammasome independently of NLRP3 inflammasome and CASP1: the non-canonical inflammasome promotes pyroptosis through GSDMD cleavage without involving secretion of cytokine IL1B. In the non-canonical inflammasome, CASP4 is activated by direct binding to the lipid A moiety of LPS without the need of an upstream sensor. LPS-binding promotes CASP4 activation and CASP4-mediated cleavage of GSDMD and IL18, followed by IL18 secretion through the GSDMD pore, pyroptosis of infected cells and their extrusion into the gut lumen. Also indirectly promotes secretion of mature cytokines (IL1A and HMGB1) downstream of GSDMD-mediated pyroptosis via activation of the NLRP3 and NLRP6 inflammasomes. Involved in NLRP3-dependent CASP1 activation and IL1B secretion in response to non-canonical activators, such as UVB radiation or cholera enterotoxin. Involved in NLRP6 inflammasome-dependent activation in response to lipoteichoic acid (LTA), a cell-wall component of Gram-positive bacteria, which leads to CASP1 activation and IL1B secretion. Involved in LPS-induced IL6 secretion; this activity may not require caspase enzymatic activity. The non-canonical inflammasome is required for innate immunity to cytosolic, but not vacuolar, bacteria. Plays a crucial role in the restriction of S.typhimurium replication in colonic epithelial cells during infection. Activation of the non-canonical inflammasome in brain endothelial cells can lead to excessive pyroptosis, leading to blood-brain barrier breakdown. Pyroptosis limits bacterial replication, while cytokine secretion promotes the recruitment and activation of immune cells and triggers mucosal inflammation. May also act as an activator of adaptive immunity in dendritic cells, following activation by oxidized phospholipid 1-palmitoyl-2-arachidonoyl- sn-glycero-3-phosphorylcholine, an oxidized phospholipid (oxPAPC). Involved in cell death induced by endoplasmic reticulum stress and by treatment with cytotoxic APP peptides found in Alzheimer's patient brains. Cleavage of GSDMD is not strictly dependent on the consensus cleavage site but depends on an exosite interface on CASP4 that recognizes and binds the Gasdermin-D, C-terminal (GSDMD-CT) part. Catalyzes cleavage and maturation of IL18; IL18 processing also depends of the exosite interface on CASP4. In contrast, it does not directly process IL1B. During non-canonical inflammasome activation, cuts CGAS and may play a role in the regulation of antiviral innate immune activation. Functionally, (Microbial infection) In response to the Td92 surface protein of the periodontal pathogen T.denticola, activated by cathepsin CTSG which leads to production and secretion of IL1A and pyroptosis of gingival fibroblasts. This Homo sapiens (Human) protein is Caspase-4.